A 255-amino-acid chain; its full sequence is Hydroxyacylglutathione hydrolase (255 aa).

Residues H56, H58, D60, H61, H114, D133, and H171 each coordinate Zn(2+).

The protein belongs to the metallo-beta-lactamase superfamily. Glyoxalase II family. As to quaternary structure, monomer. Zn(2+) is required as a cofactor.

It catalyses the reaction an S-(2-hydroxyacyl)glutathione + H2O = a 2-hydroxy carboxylate + glutathione + H(+). It participates in secondary metabolite metabolism; methylglyoxal degradation; (R)-lactate from methylglyoxal: step 2/2. In terms of biological role, thiolesterase that catalyzes the hydrolysis of S-D-lactoyl-glutathione to form glutathione and D-lactic acid. The chain is Hydroxyacylglutathione hydrolase from Rhodopseudomonas palustris (strain ATCC BAA-98 / CGA009).